A 402-amino-acid chain; its full sequence is Enoyl-[acyl-carrier-protein] reductase [NADH] (402 aa).

NAD(+) contacts are provided by residues 48-53 (GASSGY), 74-75 (FE), 111-112 (DA), and 140-141 (LA). Tyr-226 is a binding site for substrate. The active-site Proton donor is Tyr-236. NAD(+) is bound by residues Lys-245 and 274-276 (VVT).

It belongs to the TER reductase family. As to quaternary structure, monomer.

It catalyses the reaction a 2,3-saturated acyl-[ACP] + NAD(+) = a (2E)-enoyl-[ACP] + NADH + H(+). The catalysed reaction is a 2,3-saturated acyl-CoA + NAD(+) = a (2E)-enoyl-CoA + NADH + H(+). It participates in lipid metabolism; fatty acid biosynthesis. Its function is as follows. Involved in the final reduction of the elongation cycle of fatty acid synthesis (FAS II). Catalyzes the reduction of a carbon-carbon double bond in an enoyl moiety that is covalently linked to an acyl carrier protein (ACP). It can also use crotonyl-CoA. This is Enoyl-[acyl-carrier-protein] reductase [NADH] from Xanthomonas oryzae pv. oryzae (strain MAFF 311018).